A 68-amino-acid polypeptide reads, in one-letter code: Large ribosomal subunit protein bL35 (68 aa).

It belongs to the bacterial ribosomal protein bL35 family.

The polypeptide is Large ribosomal subunit protein bL35 (Wolbachia pipientis subsp. Culex pipiens (strain wPip)).